Here is a 248-residue protein sequence, read N- to C-terminus: 2,3-bisphosphoglycerate-dependent phosphoglycerate mutase (248 aa).

Residues 10 to 17 (RHGQSEWN), 23 to 24 (TG), R62, 89 to 92 (ERHY), K100, 116 to 117 (RR), and 183 to 184 (GN) each bind substrate. H11 acts as the Tele-phosphohistidine intermediate in catalysis. E89 acts as the Proton donor/acceptor in catalysis.

Belongs to the phosphoglycerate mutase family. BPG-dependent PGAM subfamily.

It catalyses the reaction (2R)-2-phosphoglycerate = (2R)-3-phosphoglycerate. The protein operates within carbohydrate degradation; glycolysis; pyruvate from D-glyceraldehyde 3-phosphate: step 3/5. Functionally, catalyzes the interconversion of 2-phosphoglycerate and 3-phosphoglycerate. The protein is 2,3-bisphosphoglycerate-dependent phosphoglycerate mutase of Corynebacterium glutamicum (strain ATCC 13032 / DSM 20300 / JCM 1318 / BCRC 11384 / CCUG 27702 / LMG 3730 / NBRC 12168 / NCIMB 10025 / NRRL B-2784 / 534).